Reading from the N-terminus, the 355-residue chain is MASNPEERNSDKQKALDNAISQIEKAFGKGAIMKLKQNPVEKIDTISTGSIALDSALGVGGLPKGRIIEIFGPESSGKTTLALHVIAEAQKKGGSCAFIDAEHALDVLYARKLGVSTDDLVISQPDTGEQALHIVEYLVCSGAVDVIVIDSVAALTPRAEIEGDMGDQHMGLQARLLSHGLRKLTSAVSKANCILIFINQIRMKIGVVYGNPETTTGGNALKFYTSVRLDIRKIGVIKDKENITGNETRVKVVKNKVAPPFREAKFDIMYNEGISKLGEIIDMGAKLGVLEKAGAYYSYNNTRLGQGRENVKTYLKTNKEVANEIETKIRDLLRNHDNSIIIDEDSEQLLEESVF.

72–79 (GPESSGKT) is an ATP binding site.

It belongs to the RecA family.

The protein resides in the cytoplasm. Functionally, can catalyze the hydrolysis of ATP in the presence of single-stranded DNA, the ATP-dependent uptake of single-stranded DNA by duplex DNA, and the ATP-dependent hybridization of homologous single-stranded DNAs. It interacts with LexA causing its activation and leading to its autocatalytic cleavage. The sequence is that of Protein RecA from Wolbachia sp. subsp. Drosophila simulans (strain wRi).